Here is a 407-residue protein sequence, read N- to C-terminus: Peptidase T (407 aa).

Residue H82 participates in Zn(2+) binding. The active site involves D84. D143 contributes to the Zn(2+) binding site. Catalysis depends on E177, which acts as the Proton acceptor. Residues E178, D200, and H382 each contribute to the Zn(2+) site.

The protein belongs to the peptidase M20B family. It depends on Zn(2+) as a cofactor.

It localises to the cytoplasm. It carries out the reaction Release of the N-terminal residue from a tripeptide.. In terms of biological role, cleaves the N-terminal amino acid of tripeptides. This chain is Peptidase T, found in Streptococcus pyogenes serotype M4 (strain MGAS10750).